A 152-amino-acid polypeptide reads, in one-letter code: Clitocypin-5 (152 aa).

Homodimer.

Binds and inhibits cysteine proteinases. Inhibits most strongly papain and cathepsin L, more weakly bromelain and cathepsin B while it is completely ineffective against cathepsin H. The chain is Clitocypin-5 (clt5) from Clitocybe nebularis (Clouded agaric).